The following is a 367-amino-acid chain: Leu/Ile/Val-binding protein (367 aa).

The signal sequence occupies residues 1–23 (MNMKGKALLAGCIALSLSNMAFA). Cys-76 and Cys-101 are oxidised to a cystine.

Belongs to the leucine-binding protein family.

The protein localises to the periplasm. Its function is as follows. This protein is a component of the leucine, isoleucine, valine, (threonine) transport system, which is one of the two periplasmic binding protein-dependent transport systems of the high-affinity transport of the branched-chain amino acids. This Citrobacter freundii protein is Leu/Ile/Val-binding protein (livJ).